A 569-amino-acid chain; its full sequence is Proline--tRNA ligase (569 aa).

This sequence belongs to the class-II aminoacyl-tRNA synthetase family. ProS type 1 subfamily. As to quaternary structure, homodimer.

It is found in the cytoplasm. It catalyses the reaction tRNA(Pro) + L-proline + ATP = L-prolyl-tRNA(Pro) + AMP + diphosphate. Catalyzes the attachment of proline to tRNA(Pro) in a two-step reaction: proline is first activated by ATP to form Pro-AMP and then transferred to the acceptor end of tRNA(Pro). As ProRS can inadvertently accommodate and process non-cognate amino acids such as alanine and cysteine, to avoid such errors it has two additional distinct editing activities against alanine. One activity is designated as 'pretransfer' editing and involves the tRNA(Pro)-independent hydrolysis of activated Ala-AMP. The other activity is designated 'posttransfer' editing and involves deacylation of mischarged Ala-tRNA(Pro). The misacylated Cys-tRNA(Pro) is not edited by ProRS. The polypeptide is Proline--tRNA ligase (Campylobacter jejuni (strain RM1221)).